The chain runs to 888 residues: MNSVWDDARIEDRTVDKPVGSSHAQEKLALVKSTLFKLDQEDRPECDSWVQLVKLICDEDREEEFTTFKELLREVKNVNDKSVTGVALIHYIIVFDRADYIELLHDNPSGAKLDLNLVDDIVGYTPLMWSFSLQRRNCCLELFNAFDEINFNMTNKAGLTAWDMVPPYSPLSEFLEQNNMFRYRTEVKHEIPQISQPKDTSLLMSNEDSTTKETFDNIDLQVAGLTLSPGANDNMFLDSDEKNMNHSQGAATLIDPTYTEDYHGTFDYDKLSPDQYLEFSDFDIPQILNLLISLPQKEPHMTTYPAGLIYQCIRYADHKIKSKPLVESLINLSLTKILTSVSSNGAAGLVSTEASLQAGDIVLQSYWLSCLSFLYYYLCRDDSFFKRHPSVLQELINTIHSIIIELTSSIHCRLISLIDSTLLAYTTIQDVKQTLYKRDWNFFKKRKQAKLLLKEKNRKQLKEQQKKELHRKSQGQENHEEEEGQQDGNDSDDRASTNDDNNSSVSLFYDKEILRHLYPPSFEEQMKPSPLKIVQIFGALSYVLNLHQTHPIFQQQCLSISVNWFATTLFNKILKDKKKRSLSRAHAIQIRLNLSTLESWIQNNDFCVPKPMLIDDFMWQRFPMTLIRDVGEIDLSDPILRNVATYKPIDENNKDLIYDTSNSLFYYQPFHKIAQIHLEPVFQLLQWLQVATTLDSEESLISTMNLLPRITPVQLLKSMEKYNYELNENKFNSKLKKFLNNKIKDSKMSKADAYLQEHEIPYLVLPTIPEMTDLYSKGPDSHSFQPFLPGSIQDDVYEIHDVNFKQRQNEPQISRTNSGTSDFTGDEDKAQYETEGVGESIDINETVEPESNAFNVGNDDYFKELNIPSSTAQRPAWSNNDDMEQNPW.

In terms of domain architecture, Dilute spans 360 to 745 (DIVLQSYWLS…KKFLNNKIKD (386 aa)). Disordered stretches follow at residues 462–504 (KEQQ…NNSS), 805–827 (KQRQ…TGDE), and 865–888 (LNIP…QNPW). Polar residues-rich tracts occupy residues 809–823 (NEPQ…TSDF) and 867–880 (IPSS…WSNN).

The protein localises to the golgi apparatus. The protein is Dilute domain-containing protein YPR089W of Saccharomyces cerevisiae (strain ATCC 204508 / S288c) (Baker's yeast).